Reading from the N-terminus, the 432-residue chain is Serine--tRNA ligase (432 aa).

238–240 (TAE) serves as a coordination point for L-serine. 269–271 (RSE) lines the ATP pocket. Residue Glu292 participates in L-serine binding. ATP is bound at residue 357 to 360 (EISS). Ser393 contacts L-serine.

The protein belongs to the class-II aminoacyl-tRNA synthetase family. Type-1 seryl-tRNA synthetase subfamily. Homodimer. The tRNA molecule binds across the dimer.

Its subcellular location is the cytoplasm. It catalyses the reaction tRNA(Ser) + L-serine + ATP = L-seryl-tRNA(Ser) + AMP + diphosphate + H(+). The catalysed reaction is tRNA(Sec) + L-serine + ATP = L-seryl-tRNA(Sec) + AMP + diphosphate + H(+). It functions in the pathway aminoacyl-tRNA biosynthesis; selenocysteinyl-tRNA(Sec) biosynthesis; L-seryl-tRNA(Sec) from L-serine and tRNA(Sec): step 1/1. Catalyzes the attachment of serine to tRNA(Ser). Is also able to aminoacylate tRNA(Sec) with serine, to form the misacylated tRNA L-seryl-tRNA(Sec), which will be further converted into selenocysteinyl-tRNA(Sec). This chain is Serine--tRNA ligase, found in Hyphomonas neptunium (strain ATCC 15444).